A 151-amino-acid polypeptide reads, in one-letter code: MNPENWLLLRRVVRFGDTDAAGVMHFHQLFRWCHEAWEESLEQYGLTPAEIFPGSRKSEVTPEVALPIIHCQADFRRPIHSGDALAMELRPERLNPNSFQVHFEFRCEEQIAAHALIRHLAINAKTRHRCALPEGIDRWLEASGVGKIGSI.

Asp-19 is an active-site residue.

This sequence belongs to the 4-hydroxybenzoyl-CoA thioesterase family. DHNA-CoA hydrolase subfamily.

The enzyme catalyses 1,4-dihydroxy-2-naphthoyl-CoA + H2O = 1,4-dihydroxy-2-naphthoate + CoA + H(+). The protein operates within cofactor biosynthesis; phylloquinone biosynthesis. It participates in quinol/quinone metabolism; 1,4-dihydroxy-2-naphthoate biosynthesis; 1,4-dihydroxy-2-naphthoate from chorismate: step 7/7. Catalyzes the hydrolysis of 1,4-dihydroxy-2-naphthoyl-CoA (DHNA-CoA) to 1,4-dihydroxy-2-naphthoate (DHNA), a reaction involved in phylloquinone (vitamin K1) biosynthesis. This chain is 1,4-dihydroxy-2-naphthoyl-CoA hydrolase, found in Prochlorococcus marinus (strain MIT 9303).